The following is a 380-amino-acid chain: Ceramide-binding protein svf1 (380 aa).

Residues 1–18 (MKAWLQSSISYYTGTAEP) are peripherally associates with membranes.

The protein belongs to the SVF1 family.

It is found in the golgi apparatus. The protein resides in the cis-Golgi network membrane. It localises to the endoplasmic reticulum membrane. The protein localises to the cytoplasm. Its subcellular location is the nucleus. Functionally, ceramide-binding protein that may transfer ceramides from the endoplasmic reticulum membrane to the cis-Golgi network membrane, and is thereby required for the biosynthesis of complex sphingolipids. In Schizosaccharomyces pombe (strain 972 / ATCC 24843) (Fission yeast), this protein is Ceramide-binding protein svf1.